Here is a 471-residue protein sequence, read N- to C-terminus: Phosphatidate cytidylyltransferase 3 (471 aa).

The segment at 1–72 is disordered; sequence MAMEKDLSPN…HRRRSSENLA (72 aa). Residues 21 to 35 show a composition bias toward polar residues; that stretch reads SYPTTPTSRMNTNNQ. The next 8 helical transmembrane spans lie at 97–116, 120–139, 149–169, 196–216, 228–250, 255–277, 293–313, and 368–388; these read WIRT…IIYM, YIWA…LFFL, LPGF…FVYG, YQMV…ILTL, YAWT…ANIF, WFLL…GFYF, GFIG…NVLG, and FSLG…ASGF.

This sequence belongs to the CDS family. Mg(2+) is required as a cofactor.

The protein localises to the membrane. The catalysed reaction is a 1,2-diacyl-sn-glycero-3-phosphate + CTP + H(+) = a CDP-1,2-diacyl-sn-glycerol + diphosphate. The protein operates within phospholipid metabolism; CDP-diacylglycerol biosynthesis; CDP-diacylglycerol from sn-glycerol 3-phosphate: step 3/3. May be involved in the synthesis of minor phospholipids and in modulation of IP3-mediated signal transduction. The sequence is that of Phosphatidate cytidylyltransferase 3 from Arabidopsis thaliana (Mouse-ear cress).